The primary structure comprises 218 residues: Peptide methionine sulfoxide reductase MsrA (218 aa).

Residues 1-28 (MSFLDSYRKKTQMPSTDEALPGRAQPIP) are disordered. Cys-57 is an active-site residue.

This sequence belongs to the MsrA Met sulfoxide reductase family.

It catalyses the reaction L-methionyl-[protein] + [thioredoxin]-disulfide + H2O = L-methionyl-(S)-S-oxide-[protein] + [thioredoxin]-dithiol. The enzyme catalyses [thioredoxin]-disulfide + L-methionine + H2O = L-methionine (S)-S-oxide + [thioredoxin]-dithiol. Functionally, has an important function as a repair enzyme for proteins that have been inactivated by oxidation. Catalyzes the reversible oxidation-reduction of methionine sulfoxide in proteins to methionine. The polypeptide is Peptide methionine sulfoxide reductase MsrA (Brucella anthropi (strain ATCC 49188 / DSM 6882 / CCUG 24695 / JCM 21032 / LMG 3331 / NBRC 15819 / NCTC 12168 / Alc 37) (Ochrobactrum anthropi)).